The sequence spans 185 residues: Protein C2-DOMAIN ABA-RELATED 9 (185 aa).

The C2 domain maps to 1 to 104 (MEDKPLGILR…LEAHQMELDF (104 aa)). Residues Arg22, Asp23, Asp28, Asp74, Lys75, Asp76, and Asp82 each coordinate Ca(2+).

It belongs to the plant CAR protein family. As to quaternary structure, binds to PYR/PYL/RCAR abscisic acid intracellular receptors in an ABA-independent manner, both at the plasma membrane and in the nucleus. Interacts with LOT1 in the nuleus; this interaction is repressed by abscisic acid (ABA) and is sensitive to calcium ion Ca(2+), leading to free CAR9 accumulation at the plasma membrane. Ca(2+) is required as a cofactor.

It is found in the cell membrane. It localises to the nucleus. Its function is as follows. Stimulates the GTPase/ATPase activities of Obg-like ATPases. Mediates the transient calcium-dependent interaction of PYR/PYL/RCAR abscisic acid (ABA) receptors with the plasma membrane and thus regulates ABA sensitivity. In Arabidopsis thaliana (Mouse-ear cress), this protein is Protein C2-DOMAIN ABA-RELATED 9.